Here is an 882-residue protein sequence, read N- to C-terminus: Exo-beta-D-glucosaminidase ARB_07888 (882 aa).

The N-terminal stretch at 1–21 is a signal peptide; that stretch reads MWFVFRPAAIPALLLTLGVSA. Residues 22–31 constitute a propeptide that is removed on maturation; the sequence is LSPLRPLVST. 6 N-linked (GlcNAc...) asparagine glycosylation sites follow: N86, N200, N234, N237, N287, and N442. Residue D466 is the Proton donor of the active site. E538 (nucleophile) is an active-site residue. N-linked (GlcNAc...) asparagine glycosylation is found at N688, N773, and N816.

Belongs to the glycosyl hydrolase 2 family. In terms of assembly, monomer.

Its subcellular location is the secreted. The enzyme catalyses Hydrolysis of chitosan or chitosan oligosaccharides to remove successive D-glucosamine residues from the non-reducing termini.. Functionally, hydrolyzes chitosan and chitooligosaccharides with retention of anomeric configuration. This chain is Exo-beta-D-glucosaminidase ARB_07888, found in Arthroderma benhamiae (strain ATCC MYA-4681 / CBS 112371) (Trichophyton mentagrophytes).